Reading from the N-terminus, the 358-residue chain is Trans-anol O-methyltransferase 1 (358 aa).

Gly201, Asp224, Asp244, Met245, and Arg259 together coordinate S-adenosyl-L-methionine. His262 acts as the Proton acceptor in catalysis.

It belongs to the class I-like SAM-binding methyltransferase superfamily. Cation-independent O-methyltransferase family. COMT subfamily. As to expression, highly expressed in developing fruits. Expressed at low levels in roots, young leaves, buds and flowers.

It carries out the reaction (E)-anol + S-adenosyl-L-methionine = (E)-anethole + S-adenosyl-L-homocysteine + H(+). It catalyses the reaction (E)-isoeugenol + S-adenosyl-L-methionine = (E)-isomethyleugenol + S-adenosyl-L-homocysteine + H(+). Its pathway is aromatic compound metabolism; phenylpropanoid biosynthesis. Its activity is regulated as follows. Inhibited by zinc and copper. Functionally, phenylpropene O-methyltransferase that catalyzes the conversion of trans-anol to trans-anethole and isoeugenol to isomethyleugenol. Phenylpropenes are the primary constituents of various essential plant oils. They are produced as antimicrobial and antianimal compounds, or as floral attractants of pollinators. The sequence is that of Trans-anol O-methyltransferase 1 (AIMT1) from Pimpinella anisum (Anise).